The following is a 383-amino-acid chain: GA-binding protein subunit beta-1 (383 aa).

S2 bears the N-acetylserine mark. ANK repeat units lie at residues 5 to 34 (DLGKKLLEAARAGQDDEVRILMANGAPFTT) and 37 to 66 (LGTSPLHLAAQYGHYSTTEVLLRAGVSRDA). K69 is subject to N6-acetyllysine. ANK repeat units lie at residues 70–99 (VDRTPLHMAASEGHASIVEVLLKHGADVNA), 103–132 (LKMTALHWATEHNHQEVVELLIKYGADVHT), and 136–166 (FCKTAFDISIDNGNEDLAEILQIAMQNQINT). An N6-acetyllysine mark is found at K340 and K369.

As to quaternary structure, heterotetramer of two alpha and two beta subunits. Interacts with HCFC1, causing repression of transcriptional activity. Acetylated by EP300/p300. Deacetylated by SIRT7, promoting heterotetramerization and activity.

Its subcellular location is the nucleus. Functionally, transcription factor capable of interacting with purine rich repeats (GA repeats). Acts as a master regulator of nuclear-encoded mitochondrial genes. The polypeptide is GA-binding protein subunit beta-1 (GABPB1) (Bos taurus (Bovine)).